Reading from the N-terminus, the 217-residue chain is Somatotropin (217 aa).

The first 26 residues, Met1 to Gly26, serve as a signal peptide directing secretion. His46 serves as a coordination point for Zn(2+). An intrachain disulfide couples Cys79 to Cys190. Residue Glu199 participates in Zn(2+) binding. A disulfide bridge links Cys207 with Cys215.

The protein belongs to the somatotropin/prolactin family.

It is found in the secreted. In terms of biological role, plays an important role in growth control. Its major role in stimulating body growth is to stimulate the liver and other tissues to secrete IGF1. It stimulates both the differentiation and proliferation of myoblasts. It also stimulates amino acid uptake and protein synthesis in muscle and other tissues. The sequence is that of Somatotropin (GH1) from Galago senegalensis (Northern lesser bushbaby).